We begin with the raw amino-acid sequence, 256 residues long: Osteocalcin 2 (256 aa).

A signal peptide spans 1–18 (MKTLVLLSICALLSVCWS). Positions 19–209 (MGAVEPEVVV…LASVLLRRRR (191 aa)) are excised as a propeptide. Low complexity predominate over residues 38–186 (AAPADPAAAA…SSSSSSSSES (149 aa)). A disordered region spans residues 38-193 (AAPADPAAAA…SESASDEAAK (156 aa)). One can recognise a Gla domain in the interval 218–252 (PLQLESLREVCELNIACDEMAETAGIVAAYVAYYG). Glu-222, Glu-226, Glu-229, and Asp-235 together coordinate Ca(2+). Residues Glu-222, Glu-226, and Glu-229 each carry the 4-carboxyglutamate modification. Cys-228 and Cys-234 form a disulfide bridge. Glu-236 bears the 4-carboxyglutamate mark.

Belongs to the osteocalcin/matrix Gla protein family. Post-translationally, gamma-carboxyglutamate residues are formed by vitamin K dependent carboxylation by GGCX. These residues are essential for the binding of calcium.

The protein resides in the secreted. The carboxylated form is one of the main organic components of the bone matrix, which constitutes 1-2% of the total bone protein. The carboxylated form binds strongly to apatite and calcium. The protein is Osteocalcin 2 of Diplodus sargus (White seabream).